Reading from the N-terminus, the 154-residue chain is Lymphocyte antigen 6K (154 aa).

The signal sequence occupies residues 1 to 20; that stretch reads MAFLVALLVVLGLQLVQSNA. Residues 21-117 enclose the UPAR/Ly6 domain; the sequence is LTCHVCEAQN…NGEGPPTDQL (97 aa). Gly123 carries the GPI-anchor amidated glycine lipid modification. Residues 124-154 constitute a propeptide, removed in mature form; the sequence is KASGRRHRYIELLLTGFMVLTANGLSALCLL.

As to quaternary structure, interacts with ADAM3 and TEX101. Strongly expressed in testes and weakly expressed in the epididymis, ovary, and uterus. Expressed in testicular germ cells (TGCs). Expressed in the testicular seminiferous tubules, in spermatocytes, spermatids, and testicular spermatozoa.

It is found in the secreted. It localises to the cytoplasm. Its subcellular location is the cell membrane. The protein resides in the cytoplasmic vesicle. The protein localises to the secretory vesicle. It is found in the acrosome. It localises to the membrane raft. Its function is as follows. Required for sperm migration into the oviduct and male fertility by controlling binding of sperm to zona pellucida. May play a role in cell growth. In Mus musculus (Mouse), this protein is Lymphocyte antigen 6K.